The chain runs to 404 residues: Trigger factor (404 aa).

Positions 160–225 (KDHLFVRTEE…VLEVKTLKLP (66 aa)) constitute a PPIase FKBP-type domain.

The protein belongs to the FKBP-type PPIase family. Tig subfamily.

It is found in the cytoplasm. The catalysed reaction is [protein]-peptidylproline (omega=180) = [protein]-peptidylproline (omega=0). Involved in protein export. Acts as a chaperone by maintaining the newly synthesized protein in an open conformation. Functions as a peptidyl-prolyl cis-trans isomerase. This Thermus thermophilus (strain ATCC 27634 / DSM 579 / HB8) protein is Trigger factor.